Reading from the N-terminus, the 715-residue chain is ATP-binding cassette sub-family B member 10, mitochondrial (715 aa).

Residues 1-82 (MRAPSARALL…SSGARRCWVL (82 aa)) constitute a mitochondrion transit peptide. Topologically, residues 83 to 133 (AGPRAAHPLFARLQGAAATGVRDLGNDSQRRPAATGRSEVWKLLGLVRPER) are mitochondrial matrix. A helical membrane pass occupies residues 134–157 (GRLSAAVGFLAVSSVITMSAPFFL). In terms of domain architecture, ABC transmembrane type-1 spans 136–422 (LSAAVGFLAV…LSSFYSELMK (287 aa)). The Mitochondrial intermembrane segment spans residues 158–178 (GRIIDVIYTNPSEGYGDSLTR). A helical membrane pass occupies residues 179-201 (LCAVLTCVFLCGAAANGIRVYLM). Residues 202–252 (QSSGQSIVNRLRTSLFSSILRQEVAFFDKTRTGELINRLSSDTALLGRSVT) are Mitochondrial matrix-facing. An N6-acetyllysine modification is found at Lys230. The helical transmembrane segment at 253–275 (ENLSDGLRAGAQASVGVGMMFFV) threads the bilayer. Residues 276–278 (SPS) lie on the Mitochondrial intermembrane side of the membrane. The chain crosses the membrane as a helical span at residues 279–298 (LATFVLSVVPPISVLAVIYG). Topologically, residues 299-357 (RYLRKLSKATQDSLAEATQLAEERIGNIRTIRAFGKEMTEVEKYTGRVDQLLQLAQKEA) are mitochondrial matrix. The chain crosses the membrane as a helical span at residues 358–381 (LARAGFFGAAGLSGNLIVLSVLYK). Over 382-395 (GGLLMGSAHMTVGE) the chain is Mitochondrial intermembrane. A helical transmembrane segment spans residues 396–417 (LSSFLMYAFWVGLSIGGLSSFY). The Mitochondrial matrix portion of the chain corresponds to 418–715 (SELMKGLGAG…AEQFLEPARA (298 aa)). One can recognise an ABC transporter domain in the interval 457 to 696 (LEFRNVHFTY…PNGLYRKLMN (240 aa)). Positions 495, 497, 498, 499, and 500 each coordinate ATP. Residue Ser499 participates in Mg(2+) binding. Cys547 carries the post-translational modification S-glutathionyl cysteine. A Mg(2+)-binding site is contributed by Asp623.

This sequence belongs to the ABC transporter superfamily. ABCB family. Mitochondrial peptide exporter (TC 3.A.1.212) subfamily. In terms of assembly, homodimer or homooligomer. Interacts with PAAT; this interaction regulates ABCB10. Interacts with SLC25A37; this interaction stabilizes SLC25A37 and enhances the function of SLC25A37 to import mitochondrial iron during erythroid differentiation. Interacts with FECH; this interaction may allow the formation of the oligomeric complex with SLC25A37. Forms a complex with ABCB7 and FECH, where a dimeric FECH bridges ABCB7 and ABCB10 homodimers; this complex may be required for cellular iron homeostasis, mitochondrial function and heme biosynthesis. Expressed at particularly high levels in fetal liver, and erythroid tissues of embryos and adults. Found also in adult bone marrow, liver and kidney, and at lower levels in heart, brain and spleen.

It is found in the mitochondrion inner membrane. The catalysed reaction is biliverdin IXalpha(in) + ATP + H2O = biliverdin IXalpha(out) + ADP + phosphate + H(+). With respect to regulation, oxidized glutathione (GSSG) stimulates ATP hydrolysis without affecting ATP binding, whereas reduced glutathione (GSH) inhibits ATP binding and hydrolysis. In terms of biological role, ATP-dependent transporter located in the mitochondrial inner membrane that catalyzes the export of biliverdin from the mitochondrial matrix, and plays a crucial role in hemoglobin synthesis and antioxidative stress. Participates in the early step of the heme biosynthetic process during insertion of iron into protoporphyrin IX (PPIX). Involved in the stabilization of the iron transporter mitoferrin-1/SLC25A37. In addition may be involved in mitochondrial unfolded protein response (UPRmt) signaling pathway, although ABCB10 probably does not participate in peptide export from mitochondria. In Mus musculus (Mouse), this protein is ATP-binding cassette sub-family B member 10, mitochondrial.